We begin with the raw amino-acid sequence, 551 residues long: RCC1 and BTB domain-containing protein 2 (551 aa).

RCC1 repeat units follow at residues 64–115, 117–169, 171–222, 223–274, 276–326, and 328–382; these read NDEI…VLAT, EGEV…VLTS, GEVF…AVVD, TGEV…VLTD, GQVY…AAKT, and GGHV…TVAE. The BTB domain occupies 394–457; the sequence is ADLKFLVDGK…LYTDSISLSP (64 aa).

It localises to the cytoplasmic vesicle. It is found in the secretory vesicle. The protein resides in the acrosome. This chain is RCC1 and BTB domain-containing protein 2 (RCBTB2), found in Homo sapiens (Human).